The sequence spans 667 residues: Phosphomethylpyrimidine synthase (667 aa).

Residues N235, M264, Y293, H329, 349-351 (SRG), 390-393 (DGMR), and E429 each bind substrate. Zn(2+) is bound at residue H433. Residue Y456 participates in substrate binding. Position 497 (H497) interacts with Zn(2+). [4Fe-4S] cluster contacts are provided by C577, C580, and C585. Residues 618 to 642 (DSYTGSESDTAKRASQREQGMAQMS) form a disordered region.

It belongs to the ThiC family. Homodimer. The cofactor is [4Fe-4S] cluster.

It carries out the reaction 5-amino-1-(5-phospho-beta-D-ribosyl)imidazole + S-adenosyl-L-methionine = 4-amino-2-methyl-5-(phosphooxymethyl)pyrimidine + CO + 5'-deoxyadenosine + formate + L-methionine + 3 H(+). It functions in the pathway cofactor biosynthesis; thiamine diphosphate biosynthesis. Catalyzes the synthesis of the hydroxymethylpyrimidine phosphate (HMP-P) moiety of thiamine from aminoimidazole ribotide (AIR) in a radical S-adenosyl-L-methionine (SAM)-dependent reaction. This Shewanella pealeana (strain ATCC 700345 / ANG-SQ1) protein is Phosphomethylpyrimidine synthase.